Reading from the N-terminus, the 152-residue chain is uncharacterized protein (152 aa).

This is an uncharacterized protein from Acanthamoeba polyphaga (Amoeba).